A 96-amino-acid chain; its full sequence is Co-chaperonin GroES (96 aa).

Belongs to the GroES chaperonin family. Heptamer of 7 subunits arranged in a ring. Interacts with the chaperonin GroEL.

It localises to the cytoplasm. Together with the chaperonin GroEL, plays an essential role in assisting protein folding. The GroEL-GroES system forms a nano-cage that allows encapsulation of the non-native substrate proteins and provides a physical environment optimized to promote and accelerate protein folding. GroES binds to the apical surface of the GroEL ring, thereby capping the opening of the GroEL channel. The chain is Co-chaperonin GroES from Haemophilus influenzae (strain ATCC 51907 / DSM 11121 / KW20 / Rd).